The sequence spans 160 residues: 2-amino-4-hydroxy-6-hydroxymethyldihydropteridine pyrophosphokinase (160 aa).

It belongs to the HPPK family. As to quaternary structure, monomer.

The catalysed reaction is 6-hydroxymethyl-7,8-dihydropterin + ATP = (7,8-dihydropterin-6-yl)methyl diphosphate + AMP + H(+). The protein operates within cofactor biosynthesis; tetrahydrofolate biosynthesis; 2-amino-4-hydroxy-6-hydroxymethyl-7,8-dihydropteridine diphosphate from 7,8-dihydroneopterin triphosphate: step 4/4. Functionally, catalyzes the transfer of pyrophosphate from adenosine triphosphate (ATP) to 6-hydroxymethyl-7,8-dihydropterin, an enzymatic step in folate biosynthesis pathway. This is 2-amino-4-hydroxy-6-hydroxymethyldihydropteridine pyrophosphokinase (folK) from Haemophilus influenzae (strain ATCC 51907 / DSM 11121 / KW20 / Rd).